Here is a 344-residue protein sequence, read N- to C-terminus: MAEPELVNGGVKENKLWKGVFAVSGIMSTLVIYGVLQEKIMRVPYGVNKEFFKHSLFLVFCNRLTTSAVSAGALLASKKVLDPVAPVYKYCLISVTNILTTTCQYEALKYVSFPVQTLAKCAKMIPVMVWGTLIMQKKYKGFDYLVAFLVTLGCSVFILFPAGDDVSPYNKGRENTVWGVSLMAGYLGFDGFTSTFQDKLFKGYNMEIHNQIFYTTLCSCVLSFTGLILQGHLLPAVDFVSLHRDCLLDIALLSTVATASQFFISYTIRTFGALTFAAIMTTRQLASIMLSCIWFSHPLSWEQCIGSVIVFGSLYAKNLLNNKKNSQTQPPPPELPQYEKVESS.

8 helical membrane passes run 16–36 (LWKGVFAVSGIMSTLVIYGVL), 56–76 (LFLVFCNRLTTSAVSAGALLA), 115–135 (VQTLAKCAKMIPVMVWGTLIM), 142–162 (FDYLVAFLVTLGCSVFILFPA), 176–196 (TVWGVSLMAGYLGFDGFTSTF), 220–240 (CVLSFTGLILQGHLLPAVDFV), 246–266 (CLLDIALLSTVATASQFFISY), and 292–312 (CIWFSHPLSWEQCIGSVIVFG). A disordered region spans residues 324–344 (KNSQTQPPPPELPQYEKVESS).

It belongs to the nucleotide-sugar transporter family. UDP-galactose:UMP antiporter (TC 2.A.7.11) subfamily.

The protein localises to the membrane. In terms of biological role, sugar transporter involved in the transport of nucleotide-sugars from cytoplasm into the Golgi and/or the endoplasmic reticulum. The protein is UDP-galactose/UDP-glucose transporter 5B of Arabidopsis thaliana (Mouse-ear cress).